Here is a 42-residue protein sequence, read N- to C-terminus: Large ribosomal subunit protein bL36 (42 aa).

This sequence belongs to the bacterial ribosomal protein bL36 family.

The chain is Large ribosomal subunit protein bL36 from Ehrlichia ruminantium (strain Gardel).